Reading from the N-terminus, the 668-residue chain is Spindle assembly abnormal protein 6 homolog (668 aa).

One can recognise a PISA domain in the interval 39–91 (VHKKELVVRLSDDTDPFFLYNLTLGEEDFQSLKNQQGLLVEFSAFPQRFIDLL). Positions 182–482 (LGVTQQALAE…NVIAWLNKQL (301 aa)) form a coiled coil. Residues 623-668 (GSVPVKGQRNGSSAGTVPVRPALPKSGSSPILSAYFPGQQSRLPAS) are disordered.

In terms of assembly, nine homodimers form a cartwheel structure with an internal diameter of 23 nM and radial spokes connecting to the microtubule triplets.

The protein resides in the cytoplasm. Its subcellular location is the cytoskeleton. The protein localises to the microtubule organizing center. It localises to the centrosome. Its function is as follows. Central scaffolding component of the centrioles ensuring their 9-fold symmetry. Required for centrosome biogenesis and duplication: required both for mother-centriole-dependent centriole duplication and deuterosome-dependent centriole amplification in multiciliated cells. The protein is Spindle assembly abnormal protein 6 homolog (sas6) of Xenopus laevis (African clawed frog).